The following is a 194-amino-acid chain: uncharacterized protein (194 aa).

Residues 1 to 24 form the signal peptide; that stretch reads MRKFVAFFVIVALAALLAGCGGQG.

This is an uncharacterized protein from Archaeoglobus fulgidus (strain ATCC 49558 / DSM 4304 / JCM 9628 / NBRC 100126 / VC-16).